We begin with the raw amino-acid sequence, 294 residues long: Protein farnesyltransferase/geranylgeranyltransferase type-1 subunit alpha (294 aa).

5 PFTA repeats span residues 57–91 (YSLRALNLTGFLIMNNPAHYTVWAYRFQILNHTPS), 92–125 (YIDNELEWLDEIAEDFQKNYQVWHHRQKILSLTK), 126–160 (NYERELEFTKKMFEIDSKNYHVWSYRVWILQNFND), 161–194 (YSQELKLTNELLEKDIYNNSAWNHRFYVLFETSK), and 199–233 (SLEEELNYLKDKILFAPDNQSAWNYLCGVLDKSGP).

It belongs to the protein prenyltransferase subunit alpha family. In terms of assembly, heterodimer of an alpha(cwp1) and a beta(cpp1 or cwg2) subunit. Requires Mg(2+) as cofactor.

It carries out the reaction L-cysteinyl-[protein] + (2E,6E)-farnesyl diphosphate = S-(2E,6E)-farnesyl-L-cysteinyl-[protein] + diphosphate. The enzyme catalyses geranylgeranyl diphosphate + L-cysteinyl-[protein] = S-geranylgeranyl-L-cysteinyl-[protein] + diphosphate. Functionally, catalyzes the transfer of a farnesyl or geranyl-geranyl moiety from farnesyl or geranyl-geranyl diphosphate to a cysteine at the fourth position from the C-terminus of several proteins having the C-terminal sequence Cys-aliphatic-aliphatic-X. The alpha(cwp1) subunit is thought to participate in a stable complex with the substrate. The beta(cpp1 or cwg2) subunits bind the peptide substrate. This chain is Protein farnesyltransferase/geranylgeranyltransferase type-1 subunit alpha (cwp1), found in Schizosaccharomyces pombe (strain 972 / ATCC 24843) (Fission yeast).